The sequence spans 433 residues: MTTTIRQFTSSSSIKGSSGLGGGSSRTSCRLSGSLGAGSCRLGSASGLGSALGSNSYSSCYSFGTGSGYGGNFGGVDGLLAGGEKATMQNLNDRLASYLDKVRALEEANTELEVKIRDWYQKQAPGPARDYSAYYHTIEDLKNKILVATVDNASILLQIDNARLAADDFRTKFETEQALRMSVEADINGLRRVLDELTLARADLEMQIENLKEELAYLKKNHEEEMNALRGQVGGEINVEMDAAPGVDLSRILSEMRDQYEKMAEKNRKDAEDWFFSKTEELNREVATNSELVQSGKSEISELRRTMQALEIELQSQLSMKASLEGSLAETENRYCVQLSQIQGLIGSVEEQLAQLRCEMEQQNQEYKILLDVKTRLEQEIATYRRLLEGEDAHLTQYKPKEPVTTRQVRTIVEEVQDGKVISSREQVHQTTR.

The tract at residues 1–24 (MTTTIRQFTSSSSIKGSSGLGGGS) is disordered. A head region spans residues 1 to 83 (MTTTIRQFTS…GGVDGLLAGG (83 aa)). Phosphoserine is present on residues serine 12 and serine 13. A Glycyl lysine isopeptide (Lys-Gly) (interchain with G-Cter in SUMO1); alternate cross-link involves residue lysine 15. Residue lysine 15 forms a Glycyl lysine isopeptide (Lys-Gly) (interchain with G-Cter in SUMO2); alternate linkage. A phosphoserine mark is found at serine 25, serine 32, serine 34, and serine 39. Phosphoserine; by RPS6KA1 is present on serine 44. The coil 1A stretch occupies residues 84–120 (EKATMQNLNDRLASYLDKVRALEEANTELEVKIRDWY). An IF rod domain is found at 84-395 (EKATMQNLND…RLLEGEDAHL (312 aa)). Threonine 110 is subject to Phosphothreonine. The interval 121-138 (QKQAPGPARDYSAYYHTI) is linker 1. The coil 1B stretch occupies residues 139–230 (EDLKNKILVA…NHEEEMNALR (92 aa)). The tract at residues 231–250 (GQVGGEINVEMDAAPGVDLS) is linker 12. The tract at residues 251–392 (RILSEMRDQY…TYRRLLEGED (142 aa)) is coil 2. Lysine 278 is covalently cross-linked (Glycyl lysine isopeptide (Lys-Gly) (interchain with G-Cter in SUMO2)). Residue threonine 279 is modified to Phosphothreonine. Serine 323 is subject to Phosphoserine. Residues 393-433 (AHLTQYKPKEPVTTRQVRTIVEEVQDGKVISSREQVHQTTR) form a tail region. Residues lysine 399, lysine 401, and lysine 420 each participate in a glycyl lysine isopeptide (Lys-Gly) (interchain with G-Cter in SUMO1); alternate cross-link. Glycyl lysine isopeptide (Lys-Gly) (interchain with G-Cter in SUMO2); alternate cross-links involve residues lysine 399, lysine 401, and lysine 420.

It belongs to the intermediate filament family. Heterodimer of a type I and a type II keratin. KRT17 associates with KRT6 isomers (KRT6A or KRT6B). Interacts with TRADD and SFN. In terms of processing, phosphorylation at Ser-44 occurs in a growth- and stress-dependent fashion in skin keratinocytes, it has no effect on filament organization. As to expression, expressed strongly in outer root sheath and medulla region of hair follicle and in the early differentiating epithelial cells (trichocytes) within the hair bulb region. Weak expression in the matrix cells of hair bulb. Also present in the sweat gland within the skin, vibrissae follicle, salivary gland, tooth and thymus.

The protein resides in the cytoplasm. Type I keratin involved in the formation and maintenance of various skin appendages, specifically in determining shape and orientation of hair. Required for the correct growth of hair follicles, in particular for the persistence of the anagen (growth) state. Modulates the function of TNF-alpha in the specific context of hair cycling. Regulates protein synthesis and epithelial cell growth through binding to the adapter protein SFN and by stimulating Akt/mTOR pathway. Involved in tissue repair. May be a marker of basal cell differentiation in complex epithelia and therefore indicative of a certain type of epithelial 'stem cells'. Acts as a promoter of epithelial proliferation by acting a regulator of immune response in skin: promotes Th1/Th17-dominated immune environment contributing to the development of basaloid skin tumors. May act as an autoantigen in the immunopathogenesis of psoriasis, with certain peptide regions being a major target for autoreactive T-cells and hence causing their proliferation. The polypeptide is Keratin, type I cytoskeletal 17 (Krt17) (Mus musculus (Mouse)).